Reading from the N-terminus, the 289-residue chain is Rhodopsin (289 aa).

Residues 1-7 lie on the Extracellular side of the membrane; it reads YLVSPAA. A helical transmembrane segment spans residues 8 to 32; it reads YAALGAYMFLLILIGFPVNFLTLYV. The Cytoplasmic portion of the chain corresponds to 33–44; that stretch reads TLEHKKLRTPLN. Residues 45 to 67 traverse the membrane as a helical segment; the sequence is YILLNLAVADLFMVLGGFTTTMY. The Extracellular segment spans residues 68–81; it reads TSMHGYFVLGRLGC. Cys81 and Cys158 are oxidised to a cystine. A helical membrane pass occupies residues 82–104; it reads NLEGFFATLGGEIALWSLVVLAI. A 'Ionic lock' involved in activated form stabilization motif is present at residues 105 to 107; sequence ERW. At 105-123 the chain is on the cytoplasmic side; that stretch reads ERWIVVCKPISKFRFTEDN. A helical membrane pass occupies residues 124 to 144; sequence AIMGLAFSWVMALACAVPPLV. The Extracellular portion of the chain corresponds to 145–173; sequence GWLRYIPEGMQCTCGVDYYTRAEGFDNES. Asn171 is a glycosylation site (N-linked (GlcNAc...) asparagine). The chain crosses the membrane as a helical span at residues 174–195; the sequence is FVIYMFIVHFLIPLSVIFFCYG. The Cytoplasmic portion of the chain corresponds to 196 to 223; it reads RLLCAVKEAAAAQQESETTQRAEKEVSR. Residues 224 to 245 traverse the membrane as a helical segment; the sequence is MVVIMVIGFLVCWLPYASVAWW. The Extracellular portion of the chain corresponds to 246-257; the sequence is IFCNQGSDFGPI. The chain crosses the membrane as a helical span at residues 258–279; that stretch reads FMTLPSFFAKRPAIYNPMIYIC. N6-(retinylidene)lysine is present on Lys267. The Cytoplasmic segment spans residues 280-289; sequence MNKQFRHCMI.

The protein belongs to the G-protein coupled receptor 1 family. Opsin subfamily. Phosphorylated on some or all of the serine and threonine residues present in the C-terminal region. Post-translationally, contains one covalently linked retinal chromophore.

Its subcellular location is the membrane. It is found in the cell projection. The protein resides in the cilium. It localises to the photoreceptor outer segment. Functionally, photoreceptor required for image-forming vision at low light intensity. While most salt water fish species use retinal as chromophore, most freshwater fish use 3-dehydroretinal, or a mixture of retinal and 3-dehydroretinal. Light-induced isomerization of 11-cis to all-trans retinal triggers a conformational change that activates signaling via G-proteins. Subsequent receptor phosphorylation mediates displacement of the bound G-protein alpha subunit by arrestin and terminates signaling. This Batrachocottus nikolskii (Fat sculpin) protein is Rhodopsin (rho).